The chain runs to 104 residues: uncharacterized protein (104 aa).

The segment covering 58–71 (PERDRARRDRDHHP) has biased composition (basic and acidic residues). A disordered region spans residues 58–84 (PERDRARRDRDHHPWSRSRSQLSPRMA).

This is an uncharacterized protein from Mycobacterium tuberculosis (strain ATCC 25618 / H37Rv).